Consider the following 311-residue polypeptide: Homeobox protein CDX-2 (311 aa).

Phosphoserine is present on serine 60. A disordered region spans residues 111–151 (EYHAHHHPHHHPHHPAASPSCASGLLQTLNLGPPGPAATAA). Over residues 114-124 (AHHHPHHHPHH) the composition is skewed to basic residues. Residues 185 to 215 (KDKYRVVYTDHQRLELEKEFHFSRYITIRRK) are interaction with DNA. Positions 185 to 244 (KDKYRVVYTDHQRLELEKEFHFSRYITIRRKSELAATLGLSERQVKIWFQNRRAKERKIK) form a DNA-binding region, homeobox. The interaction with 5-mCpG DNA stretch occupies residues 227 to 241 (RQVKIWFQNRRAKER). Residues 239-311 (KERKIKKKQQ…GGVLNSTVTQ (73 aa)) are disordered. Residues 248 to 257 (QQQQQQQQQQ) show a composition bias toward low complexity. Over residues 258–268 (PPQPPPQPSQP) the composition is skewed to pro residues. The residue at position 281 (serine 281) is a Phosphoserine; by CDK2. The 4S motif; modulates transactivation activity and protein stability motif lies at 281–293 (SPVTSLQGSVPGS). The segment covering 285 to 298 (SLQGSVPGSVPGVL) has biased composition (low complexity).

This sequence belongs to the Caudal homeobox family. As to quaternary structure, can bind DNA as a monomer or homodimer. Ubiquitinated, leading to its degradation by the proteasome. Post-translationally, phosphorylation at Ser-60 reduces transactivation capacity. Phosphorylation at Ser-281 reduces transactivation capacity and increases ubiquitin-dependent proteasome degradation. In the intestine, detected in ileum and proximal and distal colon (at protein level). In adult small intestine, predominantly localized in crypt and lower villus cells of the epithelium (at protein level). Expressed in the intestine but not detected in other tissues including stomach, liver, kidney, spleen, brain, heart, lung, pancreas, skeletal muscle and testis. Expressed specifically in gut epithelium where it is not restricted to a particular cell lineage. Abundant expression is seen in the proximal colon with slightly lower levels in distal colon. Expression in the proximal colon is not restricted either to a particular cell lineage or stage of differentiation while in the distal colon it is more abundant in the differentiated cells towards the top of the crypt.

Its subcellular location is the nucleus. Transcription factor which regulates the transcription of multiple genes expressed in the intestinal epithelium. Binds to the promoter of the intestinal sucrase-isomaltase SI and activates SI transcription. Binds to the DNA sequence 5'-ATAAAAACTTAT-3' in the promoter region of VDR and activates VDR transcription. Binds to and activates transcription of LPH. Activates transcription of CLDN2 and intestinal mucin MUC2. Binds to the 5'-AATTTTTTACAACACCT-3' DNA sequence in the promoter region of CA1 and activates CA1 transcription. Important in broad range of functions from early differentiation to maintenance of the intestinal epithelial lining of both the small and large intestine. Binds preferentially to methylated DNA. The polypeptide is Homeobox protein CDX-2 (Cdx2) (Mus musculus (Mouse)).